The sequence spans 86 residues: Small ribosomal subunit protein uS17 (86 aa).

The protein belongs to the universal ribosomal protein uS17 family. In terms of assembly, part of the 30S ribosomal subunit.

One of the primary rRNA binding proteins, it binds specifically to the 5'-end of 16S ribosomal RNA. The protein is Small ribosomal subunit protein uS17 of Streptococcus pyogenes serotype M6 (strain ATCC BAA-946 / MGAS10394).